A 331-amino-acid chain; its full sequence is Ketol-acid reductoisomerase (NADP(+)) (331 aa).

Residues 1-181 (MKVYYEKDAN…GGSRSGVIET (181 aa)) enclose the KARI N-terminal Rossmann domain. NADP(+) is bound by residues 24-27 (YGSQ), R47, and 82-85 (DQVQ). Residue H107 is part of the active site. G133 provides a ligand contact to NADP(+). One can recognise a KARI C-terminal knotted domain in the interval 182 to 327 (TFREETETDL…GELRGMMPWL (146 aa)). Residues D190, E194, E226, and E230 each coordinate Mg(2+). Substrate is bound at residue S251.

Belongs to the ketol-acid reductoisomerase family. Mg(2+) is required as a cofactor.

The enzyme catalyses (2R)-2,3-dihydroxy-3-methylbutanoate + NADP(+) = (2S)-2-acetolactate + NADPH + H(+). It carries out the reaction (2R,3R)-2,3-dihydroxy-3-methylpentanoate + NADP(+) = (S)-2-ethyl-2-hydroxy-3-oxobutanoate + NADPH + H(+). It functions in the pathway amino-acid biosynthesis; L-isoleucine biosynthesis; L-isoleucine from 2-oxobutanoate: step 2/4. The protein operates within amino-acid biosynthesis; L-valine biosynthesis; L-valine from pyruvate: step 2/4. Involved in the biosynthesis of branched-chain amino acids (BCAA). Catalyzes an alkyl-migration followed by a ketol-acid reduction of (S)-2-acetolactate (S2AL) to yield (R)-2,3-dihydroxy-isovalerate. In the isomerase reaction, S2AL is rearranged via a Mg-dependent methyl migration to produce 3-hydroxy-3-methyl-2-ketobutyrate (HMKB). In the reductase reaction, this 2-ketoacid undergoes a metal-dependent reduction by NADPH to yield (R)-2,3-dihydroxy-isovalerate. The sequence is that of Ketol-acid reductoisomerase (NADP(+)) from Nitratidesulfovibrio vulgaris (strain ATCC 29579 / DSM 644 / CCUG 34227 / NCIMB 8303 / VKM B-1760 / Hildenborough) (Desulfovibrio vulgaris).